The chain runs to 260 residues: tRNA pseudouridine synthase C (260 aa).

D54 is an active-site residue.

It belongs to the pseudouridine synthase RluA family.

The enzyme catalyses uridine(65) in tRNA = pseudouridine(65) in tRNA. Its function is as follows. Responsible for synthesis of pseudouridine from uracil-65 in transfer RNAs. This is tRNA pseudouridine synthase C (truC) from Salmonella typhi.